We begin with the raw amino-acid sequence, 720 residues long: Phosphoribosylformylglycinamidine synthase subunit PurL (720 aa).

The active site involves H47. 2 residues coordinate ATP: Y50 and K89. E91 contacts Mg(2+). Substrate-binding positions include 92-95 (SHNH) and R114. H93 (proton acceptor) is an active-site residue. D115 is a binding site for Mg(2+). Q238 is a binding site for substrate. Mg(2+) is bound at residue D266. Position 310–312 (310–312 (ESQ)) interacts with substrate. ATP contacts are provided by D488 and G525. N526 serves as a coordination point for Mg(2+). Substrate is bound at residue S528.

Belongs to the FGAMS family. Monomer. Part of the FGAM synthase complex composed of 1 PurL, 1 PurQ and 2 PurS subunits.

It is found in the cytoplasm. It catalyses the reaction N(2)-formyl-N(1)-(5-phospho-beta-D-ribosyl)glycinamide + L-glutamine + ATP + H2O = 2-formamido-N(1)-(5-O-phospho-beta-D-ribosyl)acetamidine + L-glutamate + ADP + phosphate + H(+). Its pathway is purine metabolism; IMP biosynthesis via de novo pathway; 5-amino-1-(5-phospho-D-ribosyl)imidazole from N(2)-formyl-N(1)-(5-phospho-D-ribosyl)glycinamide: step 1/2. Part of the phosphoribosylformylglycinamidine synthase complex involved in the purines biosynthetic pathway. Catalyzes the ATP-dependent conversion of formylglycinamide ribonucleotide (FGAR) and glutamine to yield formylglycinamidine ribonucleotide (FGAM) and glutamate. The FGAM synthase complex is composed of three subunits. PurQ produces an ammonia molecule by converting glutamine to glutamate. PurL transfers the ammonia molecule to FGAR to form FGAM in an ATP-dependent manner. PurS interacts with PurQ and PurL and is thought to assist in the transfer of the ammonia molecule from PurQ to PurL. This is Phosphoribosylformylglycinamidine synthase subunit PurL from Cereibacter sphaeroides (strain KD131 / KCTC 12085) (Rhodobacter sphaeroides).